Reading from the N-terminus, the 303-residue chain is Type II methyltransferase M.MjaI (303 aa).

It belongs to the N(4)/N(6)-methyltransferase family. N(4) subfamily.

The catalysed reaction is a 2'-deoxycytidine in DNA + S-adenosyl-L-methionine = an N(4)-methyl-2'-deoxycytidine in DNA + S-adenosyl-L-homocysteine + H(+). Functionally, a beta subtype methylase that recognizes the double-stranded sequence 5'-CTAG-3', methylates C-1 on both strands, and protects the DNA from cleavage by the MjaI endonuclease. The sequence is that of Type II methyltransferase M.MjaI (mjaIM) from Methanocaldococcus jannaschii (strain ATCC 43067 / DSM 2661 / JAL-1 / JCM 10045 / NBRC 100440) (Methanococcus jannaschii).